Reading from the N-terminus, the 284-residue chain is 2-dehydro-3-deoxyphosphooctonate aldolase (284 aa).

This sequence belongs to the KdsA family.

The protein resides in the cytoplasm. It carries out the reaction D-arabinose 5-phosphate + phosphoenolpyruvate + H2O = 3-deoxy-alpha-D-manno-2-octulosonate-8-phosphate + phosphate. Its pathway is carbohydrate biosynthesis; 3-deoxy-D-manno-octulosonate biosynthesis; 3-deoxy-D-manno-octulosonate from D-ribulose 5-phosphate: step 2/3. It functions in the pathway bacterial outer membrane biogenesis; lipopolysaccharide biosynthesis. The protein is 2-dehydro-3-deoxyphosphooctonate aldolase of Klebsiella pneumoniae subsp. pneumoniae (strain ATCC 700721 / MGH 78578).